A 59-amino-acid chain; its full sequence is Large ribosomal subunit protein bL32c (59 aa).

The segment at 36 to 59 is disordered; that stretch reads KSRSFSGVSEHPKPKGFSRQQTNK.

The protein belongs to the bacterial ribosomal protein bL32 family.

It localises to the plastid. It is found in the chloroplast. The chain is Large ribosomal subunit protein bL32c from Oryza nivara (Indian wild rice).